Here is a 127-residue protein sequence, read N- to C-terminus: Putative lipoprotein LprJ (127 aa).

A signal peptide spans 1-34 (MTAHTHDGTRTWRTGRQATTLLALLAGVFGGAAS). Cys35 is lipidated: N-palmitoyl cysteine. A lipid anchor (S-diacylglycerol cysteine) is attached at Cys35. At 35 to 99 (CAAPIQADMM…MAEINGMSRD (65 aa)) the chain is on the extracellular side. The helical transmembrane segment at 100-120 (MASTFTIVAIGTYCPAVIAPL) threads the bilayer. Residues 121–127 (MPNRLQA) are Cytoplasmic-facing.

In terms of assembly, may interact with sensor protein KdpD. Modified by Lgt on Cys-35 with an S-linked diacylglycerol, signal peptide is removed by LspA, modified by Lnt with amide-linked fatty acid.

The protein localises to the cell membrane. Functionally, overexpression induces expression of sensor protein kdpD gene at low K(+) concentrations (0 and 250 uM, tested in M.smegatis). This chain is Putative lipoprotein LprJ (lprJ), found in Mycobacterium tuberculosis (strain ATCC 25618 / H37Rv).